The chain runs to 204 residues: DNA-directed RNA polymerase subunit gamma (204 aa).

Zn(2+) contacts are provided by Cys-34, Cys-36, Cys-49, and Cys-52.

Belongs to the RNA polymerase beta' chain family. RpoC1 subfamily. As to quaternary structure, in cyanobacteria the RNAP catalytic core is composed of 2 alpha, 1 beta, 1 beta', 1 gamma and 1 omega subunit. When a sigma factor is associated with the core the holoenzyme is formed, which can initiate transcription. Zn(2+) is required as a cofactor.

The catalysed reaction is RNA(n) + a ribonucleoside 5'-triphosphate = RNA(n+1) + diphosphate. DNA-dependent RNA polymerase catalyzes the transcription of DNA into RNA using the four ribonucleoside triphosphates as substrates. The protein is DNA-directed RNA polymerase subunit gamma (rpoC1) of Prochlorococcus marinus (strain DV1).